An 880-amino-acid polypeptide reads, in one-letter code: Potassium/sodium hyperpolarization-activated cyclic nucleotide-gated channel 1 (880 aa).

The interval 1–80 is disordered; that stretch reads MEGGGKPNSS…SAGGLEDAEG (80 aa). The Cytoplasmic segment spans residues 1–136; that stretch reads MEGGGKPNSS…WIIHSYSDFR (136 aa). Positions 8–34 are enriched in low complexity; sequence NSSSNSRDDGNSVFPAKAPATGAGPAA. A compositionally biased stretch (gly residues) spans 62–71; the sequence is DGGGGGGEES. A helical membrane pass occupies residues 137-158; that stretch reads FYWDLIMLIMMVGNLVIIPVGI. Residues 159-167 are Extracellular-facing; sequence TFFTEQTTT. The chain crosses the membrane as a helical span at residues 168-188; it reads PWIIFNVASDTVFLLDLIMNF. Topologically, residues 189-209 are cytoplasmic; the sequence is RTGTVNEDSSEIILDPKVIKM. A helical transmembrane segment spans residues 210-230; that stretch reads NYLKSWFVVDFISSIPVDYIF. Residues 231–254 lie on the Extracellular side of the membrane; sequence LIVEKGMDSEVYKTARALRIVRFT. Residues 255-275 form a helical; Voltage-sensor membrane-spanning segment; it reads KILSLLRLLRLSRLIRYIHQW. Residues 276-289 are Cytoplasmic-facing; that stretch reads EEIFHMTYDLASAV. The chain crosses the membrane as a helical span at residues 290–312; the sequence is VRIFNLIGMMLLLCHWDGCLQFL. Over 313–338 the chain is Extracellular; sequence VPLLQDFPPDCWVSLNEMVNDSWGKQ. The N-linked (GlcNAc...) asparagine glycan is linked to Asn332. The pore-forming intramembrane region spans 339–360; sequence YSYALFKAMSHMLCIGYGAQAP. Residues 352–356 carry the Selectivity filter motif; it reads CIGYG. At 361-365 the chain is on the extracellular side; it reads VSMSD. A helical transmembrane segment spans residues 366 to 386; sequence LWITMLSMIVGATCYAMFVGH. Topologically, residues 387–880 are cytoplasmic; sequence ATALIQSLDS…AEKPRFASNL (494 aa). 3',5'-cyclic AMP is bound by residues Gly533, Glu534, Cys536, Arg543, Thr544, Arg584, and Arg587. Residues 641–664 are compositionally biased toward polar residues; it reads LNSTSSTATPTSRMRTQSPPVYTA. Disordered regions lie at residues 641 to 686, 718 to 786, and 835 to 880; these read LNST…QPSA, ASQL…LPHE, and MSSG…ASNL. Low complexity-rich tracts occupy residues 665–685 and 725–738; these read TSLS…PQPS and PQQQ…QTQP. The span at 760–770 shows a compositional bias: polar residues; the sequence is STQALPNTSLT. The span at 844–855 shows a compositional bias: pro residues; sequence RGVPPAPPPPAA. The segment covering 870 to 880 has biased composition (basic and acidic residues); the sequence is EAEKPRFASNL.

Belongs to the potassium channel HCN family. As to quaternary structure, homotetramer. Heterotetramer with HCN2. The potassium channel is composed of a homo- or heterotetrameric complex of pore-forming subunits. Interacts with KCNE2. Interacts with the SH3 domain of CSK. Detected in myocytes in heart sinoatrial node (SAN) and in brain, in particular in the granule cell layer and in Purkinje neuron bodies in the cerebellum.

Its subcellular location is the cell membrane. It catalyses the reaction Na(+)(in) = Na(+)(out). The enzyme catalyses K(+)(in) = K(+)(out). With respect to regulation, activated by cAMP. cAMP binding promotes tetramerization and formation of an active channel. Compared to other family members, cAMP has less stimulatory effect on HCN1 because part of the molecules already contain bound cAMP and form homotetramers when cAMP levels are low, this inherent tetramerization in HCN1 results in a weaker response to increased cAMP. Its function is as follows. Hyperpolarization-activated ion channel that are permeable to sodium and potassium ions. Exhibits weak selectivity for potassium over sodium ions. Contributes to the native pacemaker currents in heart (If) and in neurons (Ih). Participates in cerebellar mechanisms of motor learning. May mediate responses to sour stimuli. The protein is Potassium/sodium hyperpolarization-activated cyclic nucleotide-gated channel 1 (HCN1) of Oryctolagus cuniculus (Rabbit).